Reading from the N-terminus, the 41-residue chain is Photosystem I reaction center subunit IX (41 aa).

Residues 7-27 (YLSTAPVLATLWFGFLAGLLI) form a helical membrane-spanning segment.

This sequence belongs to the PsaJ family.

The protein localises to the plastid. Its subcellular location is the chloroplast thylakoid membrane. May help in the organization of the PsaE and PsaF subunits. The protein is Photosystem I reaction center subunit IX of Physcomitrium patens (Spreading-leaved earth moss).